The primary structure comprises 70 residues: Large ribosomal subunit protein bL31 (70 aa).

Positions 16, 18, 37, and 40 each coordinate Zn(2+).

Belongs to the bacterial ribosomal protein bL31 family. Type A subfamily. In terms of assembly, part of the 50S ribosomal subunit. Zn(2+) is required as a cofactor.

Functionally, binds the 23S rRNA. The chain is Large ribosomal subunit protein bL31 from Glaesserella parasuis serovar 5 (strain SH0165) (Haemophilus parasuis).